Reading from the N-terminus, the 212-residue chain is External core antigen (212 aa).

A signal peptide spans 1–19; the sequence is MQLFPLCLIISCSCPTVQA. The HBEAG stretch occupies residues 25-27; sequence GWL. The interval 165–212 is disordered; it reads NAPILSTLPETTVVRRRGRSPRRRTPSPRRRRSQSPRRRRSQSRESQC. Positions 178-205 are enriched in basic residues; sequence VRRRGRSPRRRTPSPRRRRSQSPRRRRS. One copy of the 1; half-length repeat lies at 184-190; the sequence is SPRRRTP. Residues 184–206 are 3 X 8 AA repeats of S-P-R-R-R-R-S-Q; that stretch reads SPRRRTPSPRRRRSQSPRRRRSQ. 2 tandem repeats follow at residues 191-198 and 199-206.

The protein belongs to the orthohepadnavirus precore antigen family. As to quaternary structure, homodimerizes. Post-translationally, phosphorylated. In terms of processing, cleaved by host furin.

The protein localises to the secreted. It localises to the host nucleus. May regulate immune response to the intracellular capsid in acting as a T-cell tolerogen, by having an immunoregulatory effect which prevents destruction of infected cells by cytotoxic T-cells. This immune regulation may predispose to chronicity during perinatal infections and prevent severe liver injury during adult infections. The protein is External core antigen of Hepatitis B virus genotype C subtype ayr (isolate Human/Japan/Okamoto/-) (HBV-C).